Reading from the N-terminus, the 275-residue chain is Large ribosomal subunit protein uL2 (275 aa).

Disordered regions lie at residues 24–48 (LTTD…NAGD) and 224–264 (VMNP…NKRT). The segment covering 31 to 42 (KPLTKTKQRTGG) has biased composition (basic residues).

It belongs to the universal ribosomal protein uL2 family. Part of the 50S ribosomal subunit. Forms a bridge to the 30S subunit in the 70S ribosome.

In terms of biological role, one of the primary rRNA binding proteins. Required for association of the 30S and 50S subunits to form the 70S ribosome, for tRNA binding and peptide bond formation. It has been suggested to have peptidyltransferase activity; this is somewhat controversial. Makes several contacts with the 16S rRNA in the 70S ribosome. This is Large ribosomal subunit protein uL2 from Koribacter versatilis (strain Ellin345).